The sequence spans 519 residues: Putative tyrosine carboxypeptidase MATCAP2 (519 aa).

Positions 63–103 (SKEEKKHRSQKRFSSASSKQHRKPSKSPSSSHSKDPSRMTA) are disordered. H330 provides a ligand contact to Zn(2+). E331 functions as the Nucleophile in the catalytic mechanism. Positions 335 and 366 each coordinate Zn(2+).

It depends on Zn(2+) as a cofactor.

Functionally, putative tyrosine carboxypeptidase. The protein is Putative tyrosine carboxypeptidase MATCAP2 of Mus musculus (Mouse).